Here is a 257-residue protein sequence, read N- to C-terminus: HTH-type transcriptional activator mta (257 aa).

Residues 2 to 71 enclose the HTH merR-type domain; sequence KYQVKQVAEI…LDEIKEMLDH (70 aa). A DNA-binding region (H-T-H motif) is located at residues 5–24; that stretch reads VKQVAEISGVSIRTLHHYDN. Residues 71-74 are hinge; that stretch reads HPNF. The essential for dimerization stretch occupies residues 76–104; the sequence is RKAALQSQKEILMKKKQRMDEMIQTIDRT. Residues 76 to 107 are a coiled coil; that stretch reads RKAALQSQKEILMKKKQRMDEMIQTIDRTLLS.

As to quaternary structure, homodimer.

Its subcellular location is the cytoplasm. In terms of biological role, global transcriptional regulator that activates transcription of bmr and blt by binding directly to their promoter. Also stimulates the expression of the mta gene itself, ydfK and ymfE. This is HTH-type transcriptional activator mta (mta) from Bacillus subtilis (strain 168).